A 109-amino-acid polypeptide reads, in one-letter code: Small ribosomal subunit protein bS20 (109 aa).

Belongs to the bacterial ribosomal protein bS20 family.

Binds directly to 16S ribosomal RNA. The chain is Small ribosomal subunit protein bS20 from Synechococcus sp. (strain JA-2-3B'a(2-13)) (Cyanobacteria bacterium Yellowstone B-Prime).